The following is a 940-amino-acid chain: Lon protease homolog 1, mitochondrial (940 aa).

The transit peptide at 1 to 61 (MLKLFTSSAS…AFFCSEPTNG (61 aa)) directs the protein to the mitochondrion. The tract at residues 70-90 (KAVESDSEVSDSKSSSAIVPT) is disordered. Ser-74 is subject to Phosphoserine. Residues 100–309 (VLALPVPHRP…LTLELMKKEM (210 aa)) enclose the Lon N-terminal domain. Position 464-471 (464-471 (GPPGVGKT)) interacts with ATP. Positions 751-935 (QTPVGVVMGL…GKIFELAFGY (185 aa)) constitute a Lon proteolytic domain. Catalysis depends on residues Ser-841 and Lys-884.

It belongs to the peptidase S16 family. In terms of assembly, homohexamer or homoheptamer. Organized in a ring with a central cavity.

The protein localises to the mitochondrion matrix. It carries out the reaction Hydrolysis of proteins in presence of ATP.. Functionally, ATP-dependent serine protease that mediates the selective degradation of misfolded, unassembled or oxidatively damaged polypeptides as well as certain short-lived regulatory proteins in the mitochondrial matrix. May also have a chaperone function in the assembly of inner membrane protein complexes. Participates in the regulation of mitochondrial gene expression and in the maintenance of the integrity of the mitochondrial genome. Binds to mitochondrial DNA in a site-specific manner. In Arabidopsis thaliana (Mouse-ear cress), this protein is Lon protease homolog 1, mitochondrial (LON1).